The sequence spans 528 residues: GMP synthase [glutamine-hydrolyzing] (528 aa).

A Glutamine amidotransferase type-1 domain is found at 13–204 (SILILDFGSQ…VYGISSCVAD (192 aa)). Cys90 serves as the catalytic Nucleophile. Catalysis depends on residues His178 and Glu180. One can recognise a GMPS ATP-PPase domain in the interval 205–403 (WTTETYIEET…LGLPDEIIKR (199 aa)). 232–238 (SGGVDSS) provides a ligand contact to ATP.

In terms of assembly, homodimer.

It catalyses the reaction XMP + L-glutamine + ATP + H2O = GMP + L-glutamate + AMP + diphosphate + 2 H(+). The protein operates within purine metabolism; GMP biosynthesis; GMP from XMP (L-Gln route): step 1/1. In terms of biological role, catalyzes the synthesis of GMP from XMP. This chain is GMP synthase [glutamine-hydrolyzing], found in Prochlorococcus marinus (strain MIT 9312).